Consider the following 75-residue polypeptide: Small ribosomal subunit protein bS18 (75 aa).

The protein belongs to the bacterial ribosomal protein bS18 family. Part of the 30S ribosomal subunit. Forms a tight heterodimer with protein bS6.

Its function is as follows. Binds as a heterodimer with protein bS6 to the central domain of the 16S rRNA, where it helps stabilize the platform of the 30S subunit. This Paracoccus denitrificans (strain Pd 1222) protein is Small ribosomal subunit protein bS18.